Reading from the N-terminus, the 280-residue chain is Beta-lactamase OXA-58 (280 aa).

The signal sequence occupies residues 1–18 (MKLLKILSLVCLSISIGA). Residue C19 is the site of N-palmitoyl cysteine attachment. C19 carries the S-diacylglycerol cysteine lipid modification. The Acyl-ester intermediate role is filled by S83. Residues S83, K86, S130, S221, W223, and R263 each contribute to the a beta-lactam site. K86 carries the N6-carboxylysine modification.

Belongs to the class-D beta-lactamase family. In terms of assembly, monomer. Dimer. Post-translationally, carboxylated on the epsilon-amino group of a lysine, with the resulting carbamate functional group serving as a general base. Probably N-carboxylated at Lys-86 at neutral pH in vivo and undergoes complete N-decarboxylation, at pH 4.1, in vitro. N-carboxylation at Lys-86 probably increases catalytic activity under physiological conditions.

The protein localises to the cell membrane. The enzyme catalyses a beta-lactam + H2O = a substituted beta-amino acid. Activated approximately 3-fold by the presence of 0.1M NaHCO3. Class D beta-lactamase which confers resistance to the beta-lactam antibiotics, including penicillins and oxacillin, and moderate resistance to carbapenems such as imipenem; in the DH10B strain of E.coli. Acts via hydrolysis of the beta-lactam ring. Has benzylpenicillin-, oxacillin-, cephalothin- and imipenem-hydrolyzing activities. The polypeptide is Beta-lactamase OXA-58 (Acinetobacter baumannii).